We begin with the raw amino-acid sequence, 337 residues long: Putative [LysW]-lysine/[LysW]-ornithine hydrolase (337 aa).

A Zn(2+)-binding site is contributed by histidine 67. Residue aspartate 69 is part of the active site. Residue aspartate 91 coordinates Zn(2+). Glutamate 118 acts as the Proton acceptor in catalysis. Residues glutamate 119, glutamate 140, and histidine 298 each contribute to the Zn(2+) site.

This sequence belongs to the peptidase M20A family. LysK subfamily. Requires Zn(2+) as cofactor. Co(2+) serves as cofactor.

Its subcellular location is the cytoplasm. The enzyme catalyses [amino-group carrier protein]-C-terminal-gamma-(L-lysyl)-L-glutamate + H2O = [amino-group carrier protein]-C-terminal-L-glutamate + L-lysine. The catalysed reaction is [amino-group carrier protein]-C-terminal-gamma-(L-ornithyl)-L-glutamate + H2O = [amino-group carrier protein]-C-terminal-L-glutamate + L-ornithine. Its pathway is amino-acid biosynthesis; L-lysine biosynthesis via AAA pathway; L-lysine from L-alpha-aminoadipate (Thermus route): step 5/5. It functions in the pathway amino-acid biosynthesis; L-arginine biosynthesis. Catalyzes the release of L-lysine from [LysW]-gamma-L-lysine and the release of L-ornithine from [LysW]-L-ornithine. This Pyrococcus abyssi (strain GE5 / Orsay) protein is Putative [LysW]-lysine/[LysW]-ornithine hydrolase.